Reading from the N-terminus, the 237-residue chain is Ribosomal RNA large subunit methyltransferase E (237 aa).

Gly-76, Trp-78, Asp-99, Asp-115, and Asp-139 together coordinate S-adenosyl-L-methionine. Lys-179 functions as the Proton acceptor in the catalytic mechanism.

This sequence belongs to the class I-like SAM-binding methyltransferase superfamily. RNA methyltransferase RlmE family.

The protein localises to the cytoplasm. It carries out the reaction uridine(2552) in 23S rRNA + S-adenosyl-L-methionine = 2'-O-methyluridine(2552) in 23S rRNA + S-adenosyl-L-homocysteine + H(+). Its function is as follows. Specifically methylates the uridine in position 2552 of 23S rRNA at the 2'-O position of the ribose in the fully assembled 50S ribosomal subunit. The polypeptide is Ribosomal RNA large subunit methyltransferase E (Rhodopseudomonas palustris (strain ATCC BAA-98 / CGA009)).